The sequence spans 362 residues: MLVMAPRTVLLLLSAALALTETWAGSHSMRYFYTSVSRPGRGEPRFISVGYVDDTQFVRFDSDAASPREEPRAPWIEQEGPEYWDRNTQIYKAQAQTDRESLRNLRGYYNQSEAGSHTLQSMYGCDVGPDGRLLRGHDQYAYDGKDYIALNEDLRSWTAADTAAQITQRKWEAAREAEQRRAYLEGECVEWLRRYLENGKDKLERADPPKTHVTHHPISDHEATLRCWALGFYPAEITLTWQRDGEDQTQDTELVETRPAGDRTFQKWAAVVVPSGEEQRYTCHVQHEGLPKPLTLRWEPSSQSTVPIVGIVAGLAVLAVVVIGAVVAAVMCRRKSSGGKGGSYSQAACSDSAQGSDVSLTA.

Residues 1 to 24 form the signal peptide; it reads MLVMAPRTVLLLLSAALALTETWA. Residues 3–11 form a VL9 epitope region; that stretch reads VMAPRTVLL. The tract at residues 25 to 114 is alpha-1; sequence GSHSMRYFYT…LRGYYNQSEA (90 aa). The Extracellular segment spans residues 25-309; the sequence is GSHSMRYFYT…PSSQSTVPIV (285 aa). Asn87 serves as a coordination point for a peptide antigen. The Bw6 motif signature appears at 101 to 107; it reads SLRNLRG. Tyr108 provides a ligand contact to a peptide antigen. Residue Asn110 is glycosylated (N-linked (GlcNAc...) asparagine). The interval 115 to 206 is alpha-2; sequence GSHTLQSMYG…ENGKDKLERA (92 aa). A disulfide bond links Cys125 and Cys188. A peptide antigen contacts are provided by Thr167, Lys170, Glu176, Tyr183, and Tyr195. Residues 207-298 are alpha-3; sequence DPPKTHVTHH…GLPKPLTLRW (92 aa). One can recognise an Ig-like C1-type domain in the interval 209-295; it reads PKTHVTHHPI…QHEGLPKPLT (87 aa). Cys227 and Cys283 form a disulfide bridge. Residues 299–309 form a connecting peptide region; that stretch reads EPSSQSTVPIV. Residues 310 to 333 form a helical membrane-spanning segment; sequence GIVAGLAVLAVVVIGAVVAAVMCR. Residues 334–362 are Cytoplasmic-facing; it reads RKSSGGKGGSYSQAACSDSAQGSDVSLTA. The disordered stretch occupies residues 337 to 362; the sequence is SGGKGGSYSQAACSDSAQGSDVSLTA. Positions 346 to 362 are enriched in polar residues; the sequence is QAACSDSAQGSDVSLTA.

In terms of assembly, heterotrimer that consists of an alpha chain HLA-B, a beta chain B2M and a peptide (peptide-HLA-B-B2M). Early in biogenesis, HLA-B-B2M dimer interacts with the components of the peptide-loading complex composed of TAPBP, TAP1-TAP2, TAPBPL, PDIA3/ERP57 and CALR. Interacts with TAP1-TAP2 transporter via TAPBP; this interaction is obligatory for the loading of peptide epitopes delivered to the ER by TAP1-TAP2 transporter. Interacts with TAPBPL; TAPBPL binds peptide-free HLA-B-B2M complexes or those loaded with low affinity peptides, likely facilitating peptide exchange for higher affinity peptides. Only optimally assembled peptide-HLA-B-B2M trimer translocates to the surface of antigen-presenting cells, where it interacts with TCR and CD8 coreceptor on the surface of T cells. HLA-B (via polymorphic alpha-1 and alpha-2 domains) interacts with antigen-specific TCR (via CDR1, CDR2 and CDR3 domains). One HLA-B molecule (mainly via nonpolymorphic alpha-3 domain) interacts with one CD8A homodimer (via CDR-like loop); this interaction ensures peptide-HLA-B-B2M recognition by CD8-positive T cells only. Allele B*57:01 interacts (via Bw4 motif) with KIR3DL1 (via Ig-like C2-type domain); this interaction may interfere with peptide binding. Allele B*46:01 interacts with KIR2DL3. (Microbial infection) Interacts with HTLV-1 accessory protein p12I.

Its subcellular location is the cell membrane. It localises to the endoplasmic reticulum membrane. Its function is as follows. Antigen-presenting major histocompatibility complex class I (MHCI) molecule. In complex with B2M/beta 2 microglobulin displays primarily viral and tumor-derived peptides on antigen-presenting cells for recognition by alpha-beta T cell receptor (TCR) on HLA-B-restricted CD8-positive T cells, guiding antigen-specific T cell immune response to eliminate infected or transformed cells. May also present self-peptides derived from the signal sequence of secreted or membrane proteins, although T cells specific for these peptides are usually inactivated to prevent autoreactivity. Both the peptide and the MHC molecule are recognized by TCR, the peptide is responsible for the fine specificity of antigen recognition and MHC residues account for the MHC restriction of T cells. Typically presents intracellular peptide antigens of 8 to 13 amino acids that arise from cytosolic proteolysis via constitutive proteasome and IFNG-induced immunoproteasome. Can bind different peptides containing allele-specific binding motifs, which are mainly defined by anchor residues at position 2 and 9. In terms of biological role, allele B*07:02: Displays peptides sharing a common signature motif, namely a Pro residue at position 2 and mainly a Leu anchor residue at the C-terminus. Presents a long peptide (APRGPHGGAASGL) derived from the cancer-testis antigen CTAG1A/NY-ESO-1, eliciting a polyclonal CD8-positive T cell response against tumor cells. Presents viral epitopes derived from HIV-1 gag-pol (TPQDLNTML) and Nef (RPQVPLRPM). Presents an immunodominant epitope derived from SARS-CoV-2 N/nucleoprotein (SPRWYFYYL). Displays self-peptides including a peptide derived from the signal sequence of HLA-DPB1 (APRTVALTA). Allele B*08:01: Presents to CD8-positive T cells viral epitopes derived from EBV/HHV-4 EBNA3 (QAKWRLQTL), eliciting cytotoxic T cell response. Functionally, allele B*13:02: Presents multiple HIV-1 epitopes derived from gag (RQANFLGKI, GQMREPRGSDI), nef (RQDILDLWI), gag-pol (RQYDQILIE, GQGQWTYQI) and rev (LQLPPLERL), all having in common a Gln residue at position 2 and mainly hydrophobic amino acids Leu, Ile or Val at the C-terminus. Associated with successful control of HIV-1 infection. Its function is as follows. Allele B*18:01: Preferentially presents octomeric and nonameric peptides sharing a common motif, namely a Glu at position 2 and Phe or Tyr anchor residues at the C-terminus. Presents an EBV/HHV-4 epitope derived from BZLF1 (SELEIKRY). May present to CD8-positive T cells an antigenic peptide derived from MAGEA3 (MEVDPIGHLY), triggering an anti-tumor immune response. May display a broad repertoire of self-peptides with a preference for peptides derived from RNA-binding proteins. In terms of biological role, allele B*27:05: Presents to CD8-positive T cells immunodominant viral epitopes derived from HCV POLG (ARMILMTHF), HIV-1 gag (KRWIILGLNK), IAV NP (SRYWAIRTR), SARS-CoV-2 N/nucleoprotein (QRNAPRITF), EBV/HHV-4 EBNA4 (HRCQAIRKK) and EBV/HHV-4 EBNA6 (RRIYDLIEL), conferring longterm protection against viral infection. Can present self-peptides derived from cytosolic and nuclear proteins. All peptides carry an Arg at position 2. The peptide-bound form interacts with NK cell inhibitory receptor KIR3DL1 and inhibits NK cell activation in a peptide-specific way, being particularly sensitive to the nature of the amino acid side chain at position 8 of the antigenic peptide. KIR3DL1 fails to recognize HLA-B*27:05 in complex with B2M and EBV/HHV-4 EBNA6 (RRIYDLIEL) peptide, which can lead to increased activation of NK cells during infection. May present an altered repertoire of peptides in the absence of TAP1-TAP2 and TAPBPL. Allele B*40:01: Presents immunodominant viral epitopes derived from EBV/HHV-4 LMP2 (IEDPPFNSL) and SARS-CoV-2 N/nucleoprotein (MEVTPSGTWL), triggering memory CD8-positive T cell response. Displays self-peptides sharing a signature motif, namely a Glu at position 2 and a Leu anchor residue at the C-terminus. Functionally, allele B*41:01: Displays self-peptides sharing a signature motif, namely a Glu at position 2 and Ala or Pro anchor residues at the C-terminus. Its function is as follows. Allele B*44:02: Presents immunodominant viral epitopes derived from EBV/HHV-4 EBNA4 (VEITPYKPTW) and EBNA6 (AEGGVGWRHW, EENLLDFVRF), triggering memory CD8-positive T cell response. Displays self-peptides sharing a signature motif, namely a Glu at position 2 and Phe, Tyr or Trp anchor residues at the C-terminus. In terms of biological role, allele B*45:01: Displays self-peptides sharing a signature motif, namely a Glu at position 2 and Ala or Pro anchor residues at the C-terminus. Allele B*46:01: Preferentially presents nonameric peptides sharing a signature motif, namely Ala and Leu at position 2 and Tyr, Phe, Leu, or Met anchor residues at the C-terminus. The peptide-bound form interacts with KIR2DL3 and inhibits NK cell cytotoxic response in a peptide-specific way. Functionally, allele B*47:01: Displays self-peptides sharing a signature motif, namely an Asp at position 2 and Leu or Met anchor residues at the C-terminus. Its function is as follows. Allele B*49:01: Displays self-peptides sharing a signature motif, namely a Glu at position 2 and Ile or Val anchor residues at the C-terminus. In terms of biological role, allele B*50:01: Displays self-peptides sharing a signature motif, namely a Glu at position 2 and Ala or Pro anchor residues at the C-terminus. Allele B*51:01: Presents an octomeric HIV-1 epitope derived from gag-pol (TAFTIPSI) to the public TRAV17/TRBV7-3 TCR clonotype, strongly suppressing HIV-1 replication. Functionally, allele B*54:01: Displays peptides sharing a common signature motif, namely a Pro residue at position 2 and Ala anchor residue at the C-terminus. Its function is as follows. Allele B*55:01: Displays peptides sharing a common signature motif, namely a Pro residue at position 2 and Ala anchor residue at the C-terminus. In terms of biological role, allele B*56:01: Displays peptides sharing a common signature motif, namely a Pro residue at position 2 and Ala anchor residue at the C-terminus. Allele B*57:01: The peptide-bound form recognizes KIR3DL1 and inhibits NK cell cytotoxic response. Presents HIV gag peptides (immunodominant KAFSPEVIPMF and subdominant KALGPAATL epitopes) predominantly to CD8-positive T cell clones expressing a TRAV41-containing TCR, triggering HLA-B-restricted T cell responses. Functionally, allele B*67:01: Displays peptides sharing a common signature motif, namely a Pro residue at position 2 and Leu anchor residue at the C-terminus. The chain is HLA class I histocompatibility antigen, B alpha chain from Homo sapiens (Human).